The primary structure comprises 474 residues: Probable glycine dehydrogenase (decarboxylating) subunit 2 (474 aa).

Lys266 bears the N6-(pyridoxal phosphate)lysine mark.

This sequence belongs to the GcvP family. C-terminal subunit subfamily. In terms of assembly, the glycine cleavage system is composed of four proteins: P, T, L and H. In this organism, the P 'protein' is a heterodimer of two subunits. It depends on pyridoxal 5'-phosphate as a cofactor.

The enzyme catalyses N(6)-[(R)-lipoyl]-L-lysyl-[glycine-cleavage complex H protein] + glycine + H(+) = N(6)-[(R)-S(8)-aminomethyldihydrolipoyl]-L-lysyl-[glycine-cleavage complex H protein] + CO2. In terms of biological role, the glycine cleavage system catalyzes the degradation of glycine. The P protein binds the alpha-amino group of glycine through its pyridoxal phosphate cofactor; CO(2) is released and the remaining methylamine moiety is then transferred to the lipoamide cofactor of the H protein. The chain is Probable glycine dehydrogenase (decarboxylating) subunit 2 from Thermus thermophilus (strain ATCC 27634 / DSM 579 / HB8).